A 354-amino-acid polypeptide reads, in one-letter code: Uroporphyrinogen decarboxylase (354 aa).

Substrate-binding positions include 27 to 31 (RQAGR), Asp-77, Tyr-154, Thr-209, and His-327.

It belongs to the uroporphyrinogen decarboxylase family. Homodimer.

Its subcellular location is the cytoplasm. It carries out the reaction uroporphyrinogen III + 4 H(+) = coproporphyrinogen III + 4 CO2. The protein operates within porphyrin-containing compound metabolism; protoporphyrin-IX biosynthesis; coproporphyrinogen-III from 5-aminolevulinate: step 4/4. In terms of biological role, catalyzes the decarboxylation of four acetate groups of uroporphyrinogen-III to yield coproporphyrinogen-III. This is Uroporphyrinogen decarboxylase from Pectobacterium atrosepticum (strain SCRI 1043 / ATCC BAA-672) (Erwinia carotovora subsp. atroseptica).